Here is a 380-residue protein sequence, read N- to C-terminus: Flap endonuclease 1 (380 aa).

An N-domain region spans residues Met-1–Arg-104. A Symmetric dimethylarginine; by PRMT5 modification is found at Arg-19. Asp-34 is a binding site for Mg(2+). DNA is bound by residues Arg-47 and Arg-70. Lys-80 is modified (N6-acetyllysine). Asp-86 is a binding site for Mg(2+). A symmetric dimethylarginine; by PRMT5 mark is found at Arg-100 and Arg-104. The segment at Glu-122–His-253 is I-domain. Mg(2+) contacts are provided by Glu-158, Glu-160, Asp-179, and Asp-181. Glu-158 is a DNA binding site. A Phosphoserine; by CDK2 modification is found at Ser-187. The residue at position 192 (Arg-192) is a Symmetric dimethylarginine; by PRMT5. Ser-197 is subject to Phosphoserine. The DNA site is built by Gly-231 and Asp-233. Mg(2+) is bound at residue Asp-233. 3 positions are modified to phosphoserine: Ser-255, Ser-293, and Ser-335. Thr-336 carries the post-translational modification Phosphothreonine. Residues Thr-336–Phe-344 are interaction with PCNA. Residues Ser-349–Lys-380 are disordered. Lys-354, Lys-375, Lys-377, and Lys-380 each carry N6-acetyllysine. Positions Ala-363–Lys-380 are enriched in basic residues.

This sequence belongs to the XPG/RAD2 endonuclease family. FEN1 subfamily. As to quaternary structure, interacts with PCNA. Three molecules of FEN1 bind to one PCNA trimer with each molecule binding to one PCNA monomer. PCNA stimulates the nuclease activity without altering cleavage specificity. The C-terminal domain binds EP300; can bind simultaneously to both PCNA and EP300. Interacts with DDX11; this interaction is direct and increases flap endonuclease activity of FEN1. Interacts with WDR4; regulating its endonuclease activity. Interacts with POLB. The cofactor is Mg(2+). Acetylated by EP300. Acetylation inhibits both endonuclease and exonuclease activity. Acetylation also reduces DNA-binding activity but does not affect interaction with PCNA or EP300. In terms of processing, phosphorylation upon DNA damage induces relocalization to the nuclear plasma. Phosphorylation at Ser-187 by CDK2 occurs during late S-phase and results in dissociation from PCNA. Post-translationally, methylation at Arg-192 by PRMT5 impedes Ser-187 phosphorylation and increases interaction with PCNA.

The protein resides in the nucleus. Its subcellular location is the nucleolus. The protein localises to the nucleoplasm. It localises to the mitochondrion. Functionally, structure-specific nuclease with 5'-flap endonuclease and 5'-3' exonuclease activities involved in DNA replication and repair. During DNA replication, cleaves the 5'-overhanging flap structure that is generated by displacement synthesis when DNA polymerase encounters the 5'-end of a downstream Okazaki fragment. It enters the flap from the 5'-end and then tracks to cleave the flap base, leaving a nick for ligation. Also involved in the long patch base excision repair (LP-BER) pathway, by cleaving within the apurinic/apyrimidinic (AP) site-terminated flap. Acts as a genome stabilization factor that prevents flaps from equilibrating into structures that lead to duplications and deletions. Also possesses 5'-3' exonuclease activity on nicked or gapped double-stranded DNA, and exhibits RNase H activity. Also involved in replication and repair of rDNA and in repairing mitochondrial DNA. This chain is Flap endonuclease 1, found in Ovis aries (Sheep).